We begin with the raw amino-acid sequence, 217 residues long: Large ribosomal subunit protein uL3 (217 aa).

The disordered stretch occupies residues 137–160; the sequence is VSASHGSHRNHRKPGSIGASSTPS.

It belongs to the universal ribosomal protein uL3 family. Part of the 50S ribosomal subunit. Forms a cluster with proteins L14 and L19.

One of the primary rRNA binding proteins, it binds directly near the 3'-end of the 23S rRNA, where it nucleates assembly of the 50S subunit. The polypeptide is Large ribosomal subunit protein uL3 (Clavibacter michiganensis subsp. michiganensis (strain NCPPB 382)).